The primary structure comprises 264 residues: 3-methyl-2-oxobutanoate hydroxymethyltransferase (264 aa).

Residues D45 and D84 each coordinate Mg(2+). 3-methyl-2-oxobutanoate-binding positions include 45 to 46, D84, and K112; that span reads DS. E114 contributes to the Mg(2+) binding site. Catalysis depends on E181, which acts as the Proton acceptor.

The protein belongs to the PanB family. As to quaternary structure, homodecamer; pentamer of dimers. The cofactor is Mg(2+).

It is found in the cytoplasm. The catalysed reaction is 3-methyl-2-oxobutanoate + (6R)-5,10-methylene-5,6,7,8-tetrahydrofolate + H2O = 2-dehydropantoate + (6S)-5,6,7,8-tetrahydrofolate. The protein operates within cofactor biosynthesis; (R)-pantothenate biosynthesis; (R)-pantoate from 3-methyl-2-oxobutanoate: step 1/2. Functionally, catalyzes the reversible reaction in which hydroxymethyl group from 5,10-methylenetetrahydrofolate is transferred onto alpha-ketoisovalerate to form ketopantoate. The chain is 3-methyl-2-oxobutanoate hydroxymethyltransferase from Aeromonas hydrophila subsp. hydrophila (strain ATCC 7966 / DSM 30187 / BCRC 13018 / CCUG 14551 / JCM 1027 / KCTC 2358 / NCIMB 9240 / NCTC 8049).